The sequence spans 638 residues: Zona pellucida sperm-binding protein 1 (638 aa).

Residues 1 to 25 (MAGGSATTWGYPVALLLLVATLGLG) form the signal peptide. Over 26 to 601 (RWLQPDPGLP…DSNGNSSLRP (576 aa)) the chain is Extracellular. Residue N76 is glycosylated (N-linked (GlcNAc...) asparagine). Over residues 165-175 (LPTSGHTSQGS) the composition is skewed to polar residues. A disordered region spans residues 165–208 (LPTSGHTSQGSGHAFPSPLDPGHSSVHPTPALPSPGPGPTLATL). One can recognise a P-type domain in the interval 234–274 (EQCQVASGHLPCIVRRTSKEACQQAGCCYDNTREVPCYYGN). Intrachain disulfides connect C236/C261, C245/C260, and C255/C270. The ZP domain maps to 279 to 553 (QCFRDGYFVL…TACSTGTTRQ (275 aa)). N379 carries N-linked (GlcNAc...) asparagine glycosylation. C457 and C478 are disulfide-bonded. Positions 549-594 (GTTRQRRSSGHRNDTARPQDIVSSPGPVGFEDSYGQEPTLGPTDSN) are disordered. The propeptide at 554–638 (RRSSGHRNDT…AQKLWESNRQ (85 aa)) is removed in mature form. N-linked (GlcNAc...) asparagine glycosylation is found at N561 and N596. The chain crosses the membrane as a helical span at residues 602–622 (LLWAVLLLPAVALVLGFGVFV). Residues 623–638 (GLSQTWAQKLWESNRQ) lie on the Cytoplasmic side of the membrane.

The protein belongs to the ZP domain family. ZPB subfamily. In terms of assembly, polymers of ZP2 and ZP3 organized into long filaments cross-linked by ZP1 homodimers. Interacts with ZP3. Post-translationally, proteolytically cleaved before the transmembrane segment to yield the secreted ectodomain incorporated in the zona pellucida. In terms of processing, O-glycosylated. Expressed in oocytes (at protein level).

The protein localises to the zona pellucida. It localises to the cell membrane. Component of the zona pellucida, an extracellular matrix surrounding oocytes which mediates sperm binding, induction of the acrosome reaction and prevents post-fertilization polyspermy. The zona pellucida is composed of 3 to 4 glycoproteins, ZP1, ZP2, ZP3, and ZP4. ZP1 ensures the structural integrity of the zona pellucida. The polypeptide is Zona pellucida sperm-binding protein 1 (ZP1) (Homo sapiens (Human)).